Consider the following 510-residue polypeptide: NAD(P)H-quinone oxidoreductase subunit 2 B, chloroplastic (510 aa).

13 helical membrane-spanning segments follow: residues 24–44 (LLLF…GLIL), 57–77 (IPWL…ALLF), 99–119 (IFQF…VEYI), 124–144 (MAIT…MFLC), 150–170 (ITIF…SGYT), 183–203 (YLLM…WLYG), 229–249 (ISIA…PAPF), 295–315 (WHLL…LIAI), 323–343 (MLAY…IVGD), 354–374 (YMLF…LFGL), 395–415 (ALSS…AGFF), 418–438 (LHLF…IGLL), and 484–504 (MIVC…IIAI).

It belongs to the complex I subunit 2 family. As to quaternary structure, NDH is composed of at least 16 different subunits, 5 of which are encoded in the nucleus.

The protein localises to the plastid. The protein resides in the chloroplast thylakoid membrane. It catalyses the reaction a plastoquinone + NADH + (n+1) H(+)(in) = a plastoquinol + NAD(+) + n H(+)(out). The enzyme catalyses a plastoquinone + NADPH + (n+1) H(+)(in) = a plastoquinol + NADP(+) + n H(+)(out). Functionally, NDH shuttles electrons from NAD(P)H:plastoquinone, via FMN and iron-sulfur (Fe-S) centers, to quinones in the photosynthetic chain and possibly in a chloroplast respiratory chain. The immediate electron acceptor for the enzyme in this species is believed to be plastoquinone. Couples the redox reaction to proton translocation, and thus conserves the redox energy in a proton gradient. The polypeptide is NAD(P)H-quinone oxidoreductase subunit 2 B, chloroplastic (Drimys granadensis).